The primary structure comprises 389 residues: Odorant receptor 85c (389 aa).

Over 1-33 the chain is Cytoplasmic; sequence MKFMKYAVFFYTSVGIEPYTIDSRSKKASLWSH. The chain crosses the membrane as a helical span at residues 34 to 54; that stretch reads LLFWANVINLSVIVFGEILYL. Topologically, residues 55-66 are extracellular; that stretch reads GVAYSDGKFIDA. A helical membrane pass occupies residues 67-87; sequence VTVLSYIGFVIVGMSKMFFIW. Residues 88 to 130 lie on the Cytoplasmic side of the membrane; that stretch reads WKKTDLSDLVKELEHIYPNGKAEEEMYRLDRYLRSCSRISITY. A helical transmembrane segment spans residues 131–151; it reads ALLYSVLIWTFNLFSIMQFLV. At 152–199 the chain is on the extracellular side; sequence YEKLLKIRVVGQTLPYLMYFPWNWHENWTYYVLLFCQNFAGHTSASGQ. N-linked (GlcNAc...) asparagine glycosylation occurs at asparagine 178. A helical membrane pass occupies residues 200–220; that stretch reads ISTDLLLCAVATQVVMHFDYL. Over 221 to 259 the chain is Cytoplasmic; it reads ARVVEKQVLDRDWSENSRFLAKTVQYHQRILRLMDVLND. Residues 260–280 traverse the membrane as a helical segment; it reads IFGIPLLLNFMVSTFVICFVG. At 281–290 the chain is on the extracellular side; that stretch reads FQMTVGVPPD. Residues 291 to 311 form a helical membrane-spanning segment; that stretch reads IMIKLFLFLFSSLSQVYLICH. Residues 312-359 are Cytoplasmic-facing; the sequence is YGQLIADASSSLSISAYKQNWQNADIRYRRALVFFIARPQRTTYLKAT. Residues 360–380 form a helical membrane-spanning segment; that stretch reads IFMNITRATMTDLLQVSYKFF. Residues 381–389 lie on the Extracellular side of the membrane; that stretch reads ALLRTMYIK.

This sequence belongs to the insect chemoreceptor superfamily. Heteromeric odorant receptor channel (TC 1.A.69) family. Or49a subfamily. In terms of assembly, interacts with Orco. Complexes exist early in the endomembrane system in olfactory sensory neurons (OSNs), coupling these complexes to the conserved ciliary trafficking pathway.

Its subcellular location is the cell membrane. Odorant receptor which mediates acceptance or avoidance behavior, depending on its substrates. The odorant receptor repertoire encodes a large collection of odor stimuli that vary widely in identity, intensity, and duration. May form a complex with Orco to form odorant-sensing units, providing sensitive and prolonged odorant signaling and calcium permeability. The polypeptide is Odorant receptor 85c (Or85c) (Drosophila melanogaster (Fruit fly)).